The following is a 299-amino-acid chain: 4-diphosphocytidyl-2-C-methyl-D-erythritol kinase (299 aa).

Lys19 is a catalytic residue. Residue 110 to 120 (PVASGIGGGSA) participates in ATP binding. Asp152 is a catalytic residue.

It belongs to the GHMP kinase family. IspE subfamily.

The enzyme catalyses 4-CDP-2-C-methyl-D-erythritol + ATP = 4-CDP-2-C-methyl-D-erythritol 2-phosphate + ADP + H(+). Its pathway is isoprenoid biosynthesis; isopentenyl diphosphate biosynthesis via DXP pathway; isopentenyl diphosphate from 1-deoxy-D-xylulose 5-phosphate: step 3/6. Catalyzes the phosphorylation of the position 2 hydroxy group of 4-diphosphocytidyl-2C-methyl-D-erythritol. The chain is 4-diphosphocytidyl-2-C-methyl-D-erythritol kinase from Agrobacterium fabrum (strain C58 / ATCC 33970) (Agrobacterium tumefaciens (strain C58)).